The primary structure comprises 183 residues: Non-classical export protein 2 homolog (183 aa).

The Cytoplasmic portion of the chain corresponds to Met1–Gly8. Residues Val9–Ala29 form a helical membrane-spanning segment. The Extracellular segment spans residues Ser30–Lys44. A helical membrane pass occupies residues Ile45 to Gly65. Residues Arg66–Pro75 lie on the Cytoplasmic side of the membrane. Residues Trp76–Ile96 traverse the membrane as a helical segment. Topologically, residues Ala97–Cys131 are extracellular. The helical transmembrane segment at Phe132–Ala152 threads the bilayer. At Lys153 to Val183 the chain is on the cytoplasmic side. The disordered stretch occupies residues Gly163–Val183.

The protein belongs to the NCE102 family.

Its subcellular location is the cytoplasm. The protein resides in the golgi apparatus membrane. The protein localises to the cell membrane. Its function is as follows. Involved in membrane organization and might act as a sensor of sphingolipids that regulates plasma membrane function. Involved in a novel pathway of export of proteins that lack a cleavable signal sequence. The chain is Non-classical export protein 2 homolog (fhn1) from Schizosaccharomyces pombe (strain 972 / ATCC 24843) (Fission yeast).